The sequence spans 98 residues: Small ribosomal subunit protein uS19 (98 aa).

The interval T77–K98 is disordered.

This sequence belongs to the universal ribosomal protein uS19 family.

In terms of biological role, protein S19 forms a complex with S13 that binds strongly to the 16S ribosomal RNA. The protein is Small ribosomal subunit protein uS19 of Chlorobium limicola (strain DSM 245 / NBRC 103803 / 6330).